Reading from the N-terminus, the 123-residue chain is Ribosome-binding factor A (123 aa).

The protein belongs to the RbfA family. Monomer. Binds 30S ribosomal subunits, but not 50S ribosomal subunits or 70S ribosomes.

It is found in the cytoplasm. Its function is as follows. One of several proteins that assist in the late maturation steps of the functional core of the 30S ribosomal subunit. Associates with free 30S ribosomal subunits (but not with 30S subunits that are part of 70S ribosomes or polysomes). Required for efficient processing of 16S rRNA. May interact with the 5'-terminal helix region of 16S rRNA. The sequence is that of Ribosome-binding factor A from Koribacter versatilis (strain Ellin345).